Here is an 899-residue protein sequence, read N- to C-terminus: Protein translocase subunit SecA (899 aa).

ATP contacts are provided by residues Gln-87, 105-109, and Asp-516; that span reads GEGKT. The Zn(2+) site is built by Cys-884, Cys-886, Cys-895, and His-896.

Belongs to the SecA family. Monomer and homodimer. Part of the essential Sec protein translocation apparatus which comprises SecA, SecYEG and auxiliary proteins SecDF. Other proteins may also be involved. The cofactor is Zn(2+).

The protein resides in the cell inner membrane. It localises to the cytoplasm. It carries out the reaction ATP + H2O + cellular proteinSide 1 = ADP + phosphate + cellular proteinSide 2.. In terms of biological role, part of the Sec protein translocase complex. Interacts with the SecYEG preprotein conducting channel. Has a central role in coupling the hydrolysis of ATP to the transfer of proteins into and across the cell membrane, serving as an ATP-driven molecular motor driving the stepwise translocation of polypeptide chains across the membrane. This is Protein translocase subunit SecA from Borrelia garinii subsp. bavariensis (strain ATCC BAA-2496 / DSM 23469 / PBi) (Borreliella bavariensis).